We begin with the raw amino-acid sequence, 609 residues long: 2',5'-phosphodiesterase 12 (609 aa).

The transit peptide at 1 to 42 (MWRLPGARAALRVIRTAVEKLSRAEAGSQTAAGAMERAVVRC) directs the protein to the mitochondrion. The segment covering 89-99 (AAAAKKSRKSR) has biased composition (basic residues). Disordered stretches follow at residues 89–111 (AAAAKKSRKSRPNASGGAACSGP) and 206–230 (AEPEVGVPSSLSPSSPSSSWTETDV). 2 stretches are compositionally biased toward low complexity: residues 100-111 (PNASGGAACSGP) and 213-224 (PSSLSPSSPSSS). A Phosphoserine modification is found at serine 217. 3 residues coordinate Mg(2+): glutamate 351, aspartate 496, and asparagine 498. The active-site Proton donor/acceptor is aspartate 496.

It belongs to the CCR4/nocturin family. It depends on Mg(2+) as a cofactor. In terms of tissue distribution, ubiquitous.

It localises to the mitochondrion matrix. It carries out the reaction Exonucleolytic cleavage of poly(A) to 5'-AMP.. In terms of biological role, enzyme that cleaves 2',5'-phosphodiester bond linking adenosines of the 5'-triphosphorylated oligoadenylates, triphosphorylated oligoadenylates referred as 2-5A modulates the 2-5A system. Degrades triphosphorylated 2-5A to produce AMP and ATP. Also cleaves 3',5'-phosphodiester bond of oligoadenylates. Plays a role as a negative regulator of the 2-5A system that is one of the major pathways for antiviral and antitumor functions induced by interferons (IFNs). Suppression of this enzyme increases cellular 2-5A levels and decreases viral replication in cultured small-airway epithelial cells and Hela cells. The protein is 2',5'-phosphodiesterase 12 (PDE12) of Homo sapiens (Human).